The sequence spans 689 residues: Chloride channel protein ClC-Kb (689 aa).

Topologically, residues 1–51 are cytoplasmic; it reads MSRVLVIEQREGEEKTLIQKHIFRPFPNTRRVVIDHLQRLKNFLFRIGDDW. 2 consecutive transmembrane segments (helical) span residues 52-83 and 92-112; these read YFLF…RWLQ and LRYL…TGFA. The helical intramembrane region spans 117-128; sequence PHSGGSGIPELK. Residue Ser-122 participates in chloride binding. Helical transmembrane passes span 142–161 and 162–181; these read IKNF…AGST and MFLG…AAYL. Asn-194 carries an N-linked (GlcNAc...) asparagine glycan. The helical intramembrane region spans 204–225; the sequence is AAAAVGVSTVFGAPISGVLFSV. The chain crosses the membrane as a helical span at residues 237–256; that stretch reads YWRGFFAATCGAFVFRLLAV. Residues Glu-260, Glu-262, Asp-279, and Glu-282 each coordinate Ca(2+). The next 2 helical transmembrane spans lie at 283–311 and 326–343; these read MFFF…LGYV and PMYS…TFPE. An intramembrane region (helical) is located at residues 350 to 361; the sequence is ASRLTMKELLTS. A run of 2 helical transmembrane segments spans residues 402 to 422 and 423 to 442; these read GTLA…TTLP and MPAG…GRLV. Residue Phe-428 coordinates chloride. Residues 466-498 constitute an intramembrane region (helical); it reads GGYAWQGAPAYSGAVTHSVSTALLAFEATGQIA. Residues 502–522 form a helical membrane-spanning segment; that stretch reads PVILCVLIANAFTQKLQPSFY. The Cytoplasmic segment spans residues 523-689; that stretch reads DGTIIVKKLP…KAIEDLANPK (167 aa). 2 CBS domains span residues 553–613 and 630–689; these read MNPD…SHER and ACSI…ANPK.

The protein belongs to the chloride channel (TC 2.A.49) family. In terms of processing, N-glycosylated on a single asparagine, probably Asn-365 or Asn-375. Expressed in two distinct regions of the kidney; the proximal convoluted tubule and the diluting segment.

The protein resides in the cell membrane. Voltage-gated chloride channel. Chloride channels have several functions including the regulation of cell volume, the stabilization of membrane potential, signal transduction and transepithelial transport. In Xenopus laevis (African clawed frog), this protein is Chloride channel protein ClC-Kb (clcnkb).